The chain runs to 109 residues: Putative ankyrin repeat protein L482 (109 aa).

ANK repeat units follow at residues 1-26, 27-56, 57-86, and 88-109; these read YLTE…NITT, NNNY…NIRS, ENNL…DIRS, and NNYA…YLVA.

This Acanthamoeba polyphaga (Amoeba) protein is Putative ankyrin repeat protein L482.